A 107-amino-acid polypeptide reads, in one-letter code: Ig kappa chain V region 4135 (107 aa).

A framework-1 region spans residues 1 to 24 (ADIVMTQTPASVSEPVGGTVTIKC). The segment at 25-35 (QTSQSIDDYLS) is complementarity-determining-1. Residues 36-50 (WYQQKPGQPPKGLIY) form a framework-2 region. The interval 51–57 (RASTLAS) is complementarity-determining-2. Residues 58–89 (GVPSRFRGSGSGTDFTLTISDLECADAATYYC) form a framework-3 region. Residues 90-96 (QSTYGVG) form a complementarity-determining-3 region. The interval 97-106 (FGGGTEVVVK) is framework-4.

The sequence is that of Ig kappa chain V region 4135 from Oryctolagus cuniculus (Rabbit).